The chain runs to 169 residues: Glycine-rich RNA-binding protein 8 (169 aa).

The RRM domain occupies Tyr6 to Ser84. Arg47 is subject to ADP-ribosylarginine; by HopU1. The interval Asn80 to Gly99 is disordered. Over residues Gly86–Gly99 the composition is skewed to gly residues. Positions Gly86 to Gly168 are glycine-rich (GR) required for cell-to-cell movement. The interval Gly95–Tyr143 is nuclear targeting sequence (M9). Ser103 is subject to Phosphoserine. Residues Gly130–Trp169 form a disordered region.

The protein belongs to the GR-RBP family. In terms of assembly, interacts with TRN1. Binds to small phloem-mobile single-stranded RNAs (ss-sRNA, e.g. small interfering RNA (siRNA) and microRNA (miRNA)) in the phloeme exudate, including viral-derived sRNA (vsiRNA). Post-translationally, ADP-ribosylated by the Pseudomonas syringae type III effector HopU1. ADP-ribosylation reduces the ability of the protein to bind RNA. Ubiquitous.

Its subcellular location is the cytoplasm. It is found in the nucleus. The protein localises to the secreted. In terms of biological role, plays a role in RNA transcription or processing during stress. Binds RNAs and DNAs sequence with a preference to single-stranded nucleic acids. Involved in mRNA alternative splicing of numerous targets by modulating splice site selection. Negatively regulates the circadian oscillations of its own transcript as well as RBG7 transcript. Forms an interlocked post-transcriptional negative feedback loop with the RBG7 autoregulatory circuit. Both proteins negatively autoregulate and reciprocally crossregulate by binding to their pre-mRNAs and promoting unproductive splicing coupled to degradation via the NMD pathway. Target of the Pseudomonas syringae type III effector HopU1. Mediates cell-to-cell trafficking of RNA interference (RNAi) signals (small RNAs (sRNA), e.g. small interfering RNA (siRNA) and microRNA (miRNA)) which regulate growth and development, as well as responses to environmental inputs, including pathogen attack; can compromise zucchini yellow mosaic virus (ZYMV) and tobacco rattle virus (TRV) infections at the early stage. This Arabidopsis thaliana (Mouse-ear cress) protein is Glycine-rich RNA-binding protein 8.